We begin with the raw amino-acid sequence, 356 residues long: Staphylococcal superantigen-like 3 (356 aa).

An N-terminal signal peptide occupies residues 1–30; the sequence is MKMRTIAKTSLALGLLTTGAITVTTQSVKA. The interval 61–165 is disordered; the sequence is ATTQAANTRQ…TIKQAQTDMT (105 aa). Residues 69-104 are compositionally biased toward basic and acidic residues; sequence RQERTPKLEKAPNTNEEKTSASKIEKISQPKQEEQK. Positions 114–141 are enriched in low complexity; it reads PKQEQSQTTTESTTPKTKVTTPPSTNTP. Residues 142 to 164 are compositionally biased toward polar residues; it reads QPMQSTKSDTPQSPTIKQAQTDM. The sialyl Lewis X-binding stretch occupies residues 228–326; the sequence is IDVFIVLEDN…VIKMKNGGKY (99 aa).

This sequence belongs to the staphylococcal/streptococcal toxin family. Interacts with host TLR2 (via its extracellular domain).

Its subcellular location is the secreted. In terms of biological role, secreted protein that plays an essential role in immune innate response inhibition by interacting with and inhibiting host TLR2. In turn, bacteria recognition by immune cells is impaired and cytokine production is inhibited. Mechanistically, by interacting with TLR2, blocks ligand binding and thus inhibits activation. Second, by interacting with an already formed TLR2-lipopeptide complex, prevents TLR heterodimerization and downstream signaling. The interaction with host TLR2 does not involve sialyl Lewis X interactions. This is Staphylococcal superantigen-like 3 from Staphylococcus aureus (strain NCTC 8325 / PS 47).